Consider the following 283-residue polypeptide: Shikimate dehydrogenase (NADP(+)) (283 aa).

Residues 16–18 (SLS) and T63 contribute to the shikimate site. K67 (proton acceptor) is an active-site residue. Residue D79 coordinates NADP(+). Shikimate-binding residues include N88 and D103. NADP(+) contacts are provided by residues 128–132 (GAGGA), A223, and G243.

This sequence belongs to the shikimate dehydrogenase family. Homodimer.

The enzyme catalyses shikimate + NADP(+) = 3-dehydroshikimate + NADPH + H(+). The protein operates within metabolic intermediate biosynthesis; chorismate biosynthesis; chorismate from D-erythrose 4-phosphate and phosphoenolpyruvate: step 4/7. In terms of biological role, involved in the biosynthesis of the chorismate, which leads to the biosynthesis of aromatic amino acids. Catalyzes the reversible NADPH linked reduction of 3-dehydroshikimate (DHSA) to yield shikimate (SA). The protein is Shikimate dehydrogenase (NADP(+)) of Xanthomonas oryzae pv. oryzae (strain MAFF 311018).